Consider the following 345-residue polypeptide: Fructose-1,6-bisphosphatase class 1 (345 aa).

Positions 90, 109, 111, and 112 each coordinate Mg(2+). Residues 112–115 and Asn-200 each bind substrate; that span reads DGSS. Residue Glu-272 participates in Mg(2+) binding.

Belongs to the FBPase class 1 family. As to quaternary structure, homotetramer. The cofactor is Mg(2+).

It is found in the cytoplasm. The enzyme catalyses beta-D-fructose 1,6-bisphosphate + H2O = beta-D-fructose 6-phosphate + phosphate. Its pathway is carbohydrate biosynthesis; gluconeogenesis. In Bradyrhizobium diazoefficiens (strain JCM 10833 / BCRC 13528 / IAM 13628 / NBRC 14792 / USDA 110), this protein is Fructose-1,6-bisphosphatase class 1.